The chain runs to 248 residues: Anamorsin homolog (248 aa).

The interval 4–129 is N-terminal SAM-like domain; sequence FKGLQKSLYI…ETGSSARLSF (126 aa). The linker stretch occupies residues 130-161; that stretch reads AKKNASAVNVWKISGDDEELIDEEELLDEEDK. Positions 172, 181, 184, and 186 each coordinate [2Fe-2S] cluster. The tract at residues 172-186 is fe-S binding site A; sequence CSTTGKRKACKNCSC. Residues Cys209, Cys212, Cys220, and Cys223 each coordinate [4Fe-4S] cluster. 2 consecutive short sequence motifs (cx2C motif) follow at residues 209 to 212 and 220 to 223; these read CGNC and CSTC. Residues 209 to 223 are fe-S binding site B; that stretch reads CGNCYLGDAFRCSTC.

The protein belongs to the anamorsin family. Monomer. The cofactor is [2Fe-2S] cluster. It depends on [4Fe-4S] cluster as a cofactor.

The protein resides in the cytoplasm. It is found in the mitochondrion intermembrane space. Component of the cytosolic iron-sulfur (Fe-S) protein assembly (CIA) machinery. Required for the maturation of extramitochondrial Fe-S proteins. Part of an electron transfer chain functioning in an early step of cytosolic Fe-S biogenesis, facilitating the de novo assembly of a [4Fe-4S] cluster on the cytosolic Fe-S scaffold complex. Electrons are transferred from NADPH via a FAD- and FMN-containing diflavin oxidoreductase. Together with the diflavin oxidoreductase, also required for the assembly of the diferric tyrosyl radical cofactor of ribonucleotide reductase (RNR), probably by providing electrons for reduction during radical cofactor maturation in the catalytic small subunit. This Drosophila melanogaster (Fruit fly) protein is Anamorsin homolog.